Consider the following 553-residue polypeptide: MPTVDDILEHIGEFHLFQKQTFFLLALLSGAFTPIYVGIVFLGFTPNHHCRSPGVAELSQRCGWSPAEELNYTVPGLGSAGEVSFLSQCMRYEVDWNQSTLDCVDPLSSLAANRSHLPLSPCEHGWVYDTPGSSIVTEFNLVCAHSWMLDLFQSLVNVGFFIGAVGIGYLADRFGRKFCLLVTILINAISGVLMAISPNYAWMLVFRFLQGLVSKAGWLIGYILITEFVGLGYRRTVGICYQIAFTVGLLILAGVAYALPNWRWLQFAVTLPNFCFLLYFWCIPESPRWLISQNKNAKAMKIIKHIAKKNGKSVPVSLQSLTADEDTGMKLNPSFLDLVRTPQIRKHTLILMYNWFTSSVLYQGLIMHMGLAGDNIYLDFFYSALVEFPAAFIIILTIDRIGRRYPWAVSNMVAGAACLASVFIPDDLQWLKITVACLGRMGITIAYEMVCLVNAELYPTYIRNLAVLVCSSMCDIGGIVTPFLVYRLTDIWLEFPLVVFAVVGLVAGGLVLLLPETKGKALPETIEDAEKMQRPRKKKEKRIYLQVKKAELS.

Over methionine 1–threonine 21 the chain is Cytoplasmic. A helical transmembrane segment spans residues phenylalanine 22 to leucine 42. Over glycine 43–aspartate 150 the chain is Extracellular. N-linked (GlcNAc...) asparagine glycosylation is present at asparagine 71. Residues leucine 151–alanine 171 traverse the membrane as a helical segment. The Cytoplasmic portion of the chain corresponds to aspartate 172–lysine 177. The helical transmembrane segment at phenylalanine 178–proline 198 threads the bilayer. The Extracellular segment spans residues asparagine 199 to glutamine 210. The helical transmembrane segment at glycine 211–leucine 231 threads the bilayer. The Cytoplasmic segment spans residues glycine 232 to glycine 238. Residues isoleucine 239 to leucine 259 traverse the membrane as a helical segment. The Extracellular portion of the chain corresponds to proline 260 to arginine 263. A helical membrane pass occupies residues tryptophan 264 to proline 284. Positions proline 284 to arginine 288 match the Proline-rich sequence motif. Residues glutamate 285 to threonine 348 are Cytoplasmic-facing. The chain crosses the membrane as a helical span at residues leucine 349 to methionine 369. Residues glycine 370–asparagine 375 are Extracellular-facing. Residues isoleucine 376–leucine 396 traverse the membrane as a helical segment. The Cytoplasmic segment spans residues threonine 397–arginine 404. A helical transmembrane segment spans residues tyrosine 405–proline 425. At aspartate 426–lysine 432 the chain is on the extracellular side. Residues isoleucine 433 to valine 453 traverse the membrane as a helical segment. Over asparagine 454–asparagine 464 the chain is Cytoplasmic. Residues leucine 465–valine 485 traverse the membrane as a helical segment. The Extracellular segment spans residues tyrosine 486–glutamate 494. A helical transmembrane segment spans residues phenylalanine 495–proline 515. The Cytoplasmic segment spans residues glutamate 516 to serine 553.

Belongs to the major facilitator (TC 2.A.1) superfamily. Organic cation transporter (TC 2.A.1.19) family. Post-translationally, tyrosine phosphorylated by tyrosine-protein kinase YES1. As to expression, expressed in kidney and ureter. To a lower extent, also expressed in brain and embryo.

It is found in the basolateral cell membrane. It localises to the basal cell membrane. The protein resides in the apical cell membrane. It carries out the reaction (R)-noradrenaline(out) = (R)-noradrenaline(in). The catalysed reaction is (R)-adrenaline(out) = (R)-adrenaline(in). The enzyme catalyses serotonin(out) = serotonin(in). It catalyses the reaction dopamine(out) = dopamine(in). It carries out the reaction histamine(out) = histamine(in). The catalysed reaction is thiamine(in) = thiamine(out). The enzyme catalyses creatinine(in) = creatinine(out). It catalyses the reaction 1-methylnicotinamide(out) = 1-methylnicotinamide(in). It carries out the reaction guanidine(out) = guanidine(in). The catalysed reaction is choline(out) = choline(in). The enzyme catalyses agmatine(out) = agmatine(in). It catalyses the reaction putrescine(out) = putrescine(in). It carries out the reaction spermidine(in) = spermidine(out). The catalysed reaction is tyramine(in) = tyramine(out). The enzyme catalyses L-histidyl-L-proline diketopiperazine(in) = L-histidyl-L-proline diketopiperazine(out). It catalyses the reaction (R)-salsolinol(in) = (R)-salsolinol(out). It carries out the reaction N-methyl-(R)-salsolinol(in) = N-methyl-(R)-salsolinol(out). The catalysed reaction is acetylcholine(in) = acetylcholine(out). The enzyme catalyses prostaglandin F2alpha(out) = prostaglandin F2alpha(in). It catalyses the reaction prostaglandin E2(out) = prostaglandin E2(in). Tyrosine phosphorylation of the transporter leads to activation of the transport activity. TEA uptake is activated by tyrosine phosphorylation. Inhibited by cGMP, most likely through a cGMP-binding protein that interacts with OCT2. Functionally, electrogenic voltage-dependent transporter that mediates the transport of a variety of organic cations such as endogenous bioactive amines, cationic drugs and xenobiotics. Functions as a Na(+)-independent, bidirectional uniporter. Cation cellular uptake or release is driven by the electrochemical potential, i.e. membrane potential and concentration gradient. However, may also engage electroneutral cation exchange when saturating concentrations of cation substrates are reached. Predominantly expressed at the basolateral membrane of hepatocytes and proximal tubules and involved in the uptake and disposition of cationic compounds by hepatic and renal clearance from the blood flow. Implicated in monoamine neurotransmitters uptake such as histamine, dopamine, adrenaline/epinephrine, noradrenaline/norepinephrine, serotonin and tyramine, thereby supporting a physiological role in the central nervous system by regulating interstitial concentrations of neurotransmitters. Also capable of transporting dopaminergic neuromodulators cyclo(his-pro), salsolinol and N-methyl-salsolinol, thereby involved in the maintenance of dopaminergic cell integrity in the central nervous system. Mediates the bidirectional transport of acetylcholine (ACh) at the apical membrane of ciliated cell in airway epithelium, thereby playing a role in luminal release of ACh from bronchial epithelium. Also transports guanidine and endogenous monoamines such as vitamin B1/thiamine, creatinine and N-1-methylnicotinamide (NMN). Mediates the uptake and efflux of quaternary ammonium compound choline. Mediates the bidirectional transport of polyamine agmatine and the uptake of polyamines putrescine and spermidine. Able to transport non-amine endogenous compounds such as prostaglandin E2 (PGE2) and prostaglandin F2-alpha (PGF2-alpha). Also involved in the uptake of xenobiotic 4-(4-(dimethylamino)styryl)-N-methylpyridinium (ASP). May contribute to regulate the transport of organic compounds in testis across the blood-testis-barrier. In Mus musculus (Mouse), this protein is Solute carrier family 22 member 2.